We begin with the raw amino-acid sequence, 100 residues long: Small ribosomal subunit protein uS14c (100 aa).

This sequence belongs to the universal ribosomal protein uS14 family. As to quaternary structure, part of the 30S ribosomal subunit.

It localises to the plastid. Its subcellular location is the chloroplast. Binds 16S rRNA, required for the assembly of 30S particles. The sequence is that of Small ribosomal subunit protein uS14c from Lactuca sativa (Garden lettuce).